We begin with the raw amino-acid sequence, 201 residues long: Small ribosomal subunit protein uS4 (201 aa).

The S4 RNA-binding domain occupies Cys93–Asn155.

Belongs to the universal ribosomal protein uS4 family. As to quaternary structure, part of the 30S ribosomal subunit. Contacts protein S5. The interaction surface between S4 and S5 is involved in control of translational fidelity.

Functionally, one of the primary rRNA binding proteins, it binds directly to 16S rRNA where it nucleates assembly of the body of the 30S subunit. In terms of biological role, with S5 and S12 plays an important role in translational accuracy. This chain is Small ribosomal subunit protein uS4, found in Elusimicrobium minutum (strain Pei191).